A 732-amino-acid polypeptide reads, in one-letter code: 1,4-alpha-glucan branching enzyme GlgB (732 aa).

Aspartate 412 serves as the catalytic Nucleophile. The active-site Proton donor is glutamate 465.

Belongs to the glycosyl hydrolase 13 family. GlgB subfamily. As to quaternary structure, monomer.

It catalyses the reaction Transfers a segment of a (1-&gt;4)-alpha-D-glucan chain to a primary hydroxy group in a similar glucan chain.. It functions in the pathway glycan biosynthesis; glycogen biosynthesis. Functionally, catalyzes the formation of the alpha-1,6-glucosidic linkages in glycogen by scission of a 1,4-alpha-linked oligosaccharide from growing alpha-1,4-glucan chains and the subsequent attachment of the oligosaccharide to the alpha-1,6 position. This chain is 1,4-alpha-glucan branching enzyme GlgB, found in Pseudomonas aeruginosa (strain ATCC 15692 / DSM 22644 / CIP 104116 / JCM 14847 / LMG 12228 / 1C / PRS 101 / PAO1).